Consider the following 178-residue polypeptide: Interleukin-17B (178 aa).

Positions 1–22 (MDWPHSLLFLLAISIFLGPSQP) are cleaved as a signal peptide. Residues 21-44 (QPRNTKGKRKGQVRPGPLAPGPHQ) form a disordered region. N-linked (GlcNAc...) asparagine glycosylation is present at Asn-75. Disulfide bonds link Cys-121/Cys-176 and Cys-126/Cys-178.

The protein belongs to the IL-17 family.

It is found in the secreted. Its function is as follows. Stimulates the release of tumor necrosis factor alpha and IL-1-beta from the monocytic cell line THP-1. This Mesocricetus auratus (Golden hamster) protein is Interleukin-17B (IL17B).